We begin with the raw amino-acid sequence, 215 residues long: Pyridoxine/pyridoxamine 5'-phosphate oxidase (215 aa).

Residues 9–12 and Lys-69 contribute to the substrate site; that span reads RRDY. FMN is bound by residues 64 to 69, 79 to 80, Lys-86, and Gln-108; these read RVLLLK and FT. Substrate is bound by residues Tyr-126, Arg-130, and Ser-134. FMN is bound by residues 143 to 144 and Trp-188; that span reads QS. A substrate-binding site is contributed by 194–196; it reads RLH. An FMN-binding site is contributed by Arg-198.

Belongs to the pyridoxamine 5'-phosphate oxidase family. Homodimer. FMN serves as cofactor.

It catalyses the reaction pyridoxamine 5'-phosphate + O2 + H2O = pyridoxal 5'-phosphate + H2O2 + NH4(+). The catalysed reaction is pyridoxine 5'-phosphate + O2 = pyridoxal 5'-phosphate + H2O2. It functions in the pathway cofactor metabolism; pyridoxal 5'-phosphate salvage; pyridoxal 5'-phosphate from pyridoxamine 5'-phosphate: step 1/1. The protein operates within cofactor metabolism; pyridoxal 5'-phosphate salvage; pyridoxal 5'-phosphate from pyridoxine 5'-phosphate: step 1/1. Its function is as follows. Catalyzes the oxidation of either pyridoxine 5'-phosphate (PNP) or pyridoxamine 5'-phosphate (PMP) into pyridoxal 5'-phosphate (PLP). In Pseudomonas entomophila (strain L48), this protein is Pyridoxine/pyridoxamine 5'-phosphate oxidase.